A 239-amino-acid polypeptide reads, in one-letter code: Pyridoxine 5'-phosphate synthase (239 aa).

Asn7 provides a ligand contact to 3-amino-2-oxopropyl phosphate. A 1-deoxy-D-xylulose 5-phosphate-binding site is contributed by 9-10; sequence DH. Arg18 contributes to the 3-amino-2-oxopropyl phosphate binding site. The active-site Proton acceptor is the His43. Residues Arg45 and His50 each contribute to the 1-deoxy-D-xylulose 5-phosphate site. Catalysis depends on Glu70, which acts as the Proton acceptor. 1-deoxy-D-xylulose 5-phosphate is bound at residue Thr100. His191 (proton donor) is an active-site residue. 3-amino-2-oxopropyl phosphate is bound by residues Gly192 and 213 to 214; that span reads GH.

This sequence belongs to the PNP synthase family. Homooctamer; tetramer of dimers.

Its subcellular location is the cytoplasm. The enzyme catalyses 3-amino-2-oxopropyl phosphate + 1-deoxy-D-xylulose 5-phosphate = pyridoxine 5'-phosphate + phosphate + 2 H2O + H(+). Its pathway is cofactor biosynthesis; pyridoxine 5'-phosphate biosynthesis; pyridoxine 5'-phosphate from D-erythrose 4-phosphate: step 5/5. Functionally, catalyzes the complicated ring closure reaction between the two acyclic compounds 1-deoxy-D-xylulose-5-phosphate (DXP) and 3-amino-2-oxopropyl phosphate (1-amino-acetone-3-phosphate or AAP) to form pyridoxine 5'-phosphate (PNP) and inorganic phosphate. This chain is Pyridoxine 5'-phosphate synthase, found in Trichormus variabilis (strain ATCC 29413 / PCC 7937) (Anabaena variabilis).